The following is a 1541-amino-acid chain: Regulator of G-protein signaling loco (1541 aa).

Residues 1 to 66 (MHHHHPPLPI…RRKKRANYNY (66 aa)) are disordered. A compositionally biased stretch (low complexity) spans 11 to 36 (TGASGSTAVGTGAAAAEDASPAANSG). Residues 40-53 (ISTSTTPSGSNSQQ) are compositionally biased toward polar residues. One can recognise a PDZ domain in the interval 71–148 (TVEVRRGYNG…SIRMQIAENY (78 aa)). The tract at residues 182–222 (AKLHRLRNSPQKKLNPPEAVEPHKSKSSPDHPTLKPVLEDP) is disordered. The span at 201–214 (VEPHKSKSSPDHPT) shows a compositional bias: basic and acidic residues. Positions 247–423 (AALECRVIVG…VVNLVRSMYT (177 aa)) constitute a PID domain. 2 disordered regions span residues 449–473 (GAVA…SNSD) and 708–761 (SEPD…ASMN). Composition is skewed to polar residues over residues 457–473 (PQPS…SNSD) and 744–761 (EQQQ…ASMN). Positions 827-943 (SFERMLQDAA…IRSDLYKSCV (117 aa)) constitute an RGS domain. Residues 978-1004 (SASNAEDRRRKSLLPWHRKTRSKSRDR) form a disordered region. A compositionally biased stretch (basic residues) spans 987-999 (RKSLLPWHRKTRS). 2 RBD domains span residues 1072 to 1142 (SLCR…IERR) and 1143 to 1213 (VAFK…IVMV). A disordered region spans residues 1258 to 1327 (DAAASEKSRP…SEEAATTQAV (70 aa)). Positions 1273-1285 (MKSNEAPSETSSL) are enriched in polar residues. Over residues 1312-1325 (TSSSQQSEEAATTQ) the composition is skewed to low complexity. The 23-residue stretch at 1354-1376 (QDELLEGLKRAQLARLEDQRGTE) folds into the GoLoco domain. Positions 1410–1513 (KVPATPTEIP…ASKPGTFASK (104 aa)) are disordered. A compositionally biased stretch (pro residues) spans 1460 to 1469 (APPPLPPKPK). Residues 1483 to 1499 (PTGNYCNKYSPSKQVPT) are compositionally biased toward polar residues.

In terms of assembly, interacts (via GoLoco and RGS domains) with Galphai (via GDP- or GTP-bound forms). In terms of tissue distribution, expressed in surface and longitudinal glial cells, gut and heart (at protein level).

It is found in the cytoplasm. Its subcellular location is the cell membrane. The protein resides in the apical cell membrane. Functionally, acts as a regulator of G protein signaling (RGS). Modulates G protein alpha subunits nucleotide exchange and hydrolysis activities by functioning either as a GTPase-activating protein (GAP), thereby driving G protein alpha subunits into their inactive GDP-bound form, or as a GDP-dissociation inhibitor (GDI). Confers GDI and GAP activities on G(i) alpha subunit Galphai. Confers GAP activity on G(o)-alpha subunit Galphao and G(i) alpha subunit Galphai. Involved in the dorsal-ventral axis formation of the egg. Acts as a G-protein signaling for glial cell differentiation during embryogenesis; Galphai, Galphao and the G-protein coupled receptor, moody, are required in the surface glia to achieve effective insulation of the nerve cord. May be essential for nurse cell dumping during oogenesis. Required in neuroblast asymmetrical cell division. Plays a role in stress resistance and life span control. This is Regulator of G-protein signaling loco (loco) from Drosophila melanogaster (Fruit fly).